Reading from the N-terminus, the 322-residue chain is uncharacterized protein (322 aa).

The signal sequence occupies residues 1-32 (MRDGIGKRAASALFLCGVLVMLAVSSAIVSSA).

This is an uncharacterized protein from Bacillus subtilis (strain 168).